The sequence spans 270 residues: Formamidopyrimidine-DNA glycosylase (270 aa).

Pro2 serves as the catalytic Schiff-base intermediate with DNA. The active-site Proton donor is Glu3. The Proton donor; for beta-elimination activity role is filled by Lys58. DNA is bound by residues His91, Arg109, and Arg151. The FPG-type zinc finger occupies 236-270 (QVYGKTGQQCPSCETPLKAVKLAARASVYCPECQS). Arg260 functions as the Proton donor; for delta-elimination activity in the catalytic mechanism.

This sequence belongs to the FPG family. As to quaternary structure, monomer. Zn(2+) is required as a cofactor.

The catalysed reaction is Hydrolysis of DNA containing ring-opened 7-methylguanine residues, releasing 2,6-diamino-4-hydroxy-5-(N-methyl)formamidopyrimidine.. The enzyme catalyses 2'-deoxyribonucleotide-(2'-deoxyribose 5'-phosphate)-2'-deoxyribonucleotide-DNA = a 3'-end 2'-deoxyribonucleotide-(2,3-dehydro-2,3-deoxyribose 5'-phosphate)-DNA + a 5'-end 5'-phospho-2'-deoxyribonucleoside-DNA + H(+). Functionally, involved in base excision repair of DNA damaged by oxidation or by mutagenic agents. Acts as a DNA glycosylase that recognizes and removes damaged bases. Has a preference for oxidized purines, such as 7,8-dihydro-8-oxoguanine (8-oxoG). Has AP (apurinic/apyrimidinic) lyase activity and introduces nicks in the DNA strand. Cleaves the DNA backbone by beta-delta elimination to generate a single-strand break at the site of the removed base with both 3'- and 5'-phosphates. This Psychromonas ingrahamii (strain DSM 17664 / CCUG 51855 / 37) protein is Formamidopyrimidine-DNA glycosylase.